Here is a 159-residue protein sequence, read N- to C-terminus: SsrA-binding protein (159 aa).

It belongs to the SmpB family.

It localises to the cytoplasm. In terms of biological role, required for rescue of stalled ribosomes mediated by trans-translation. Binds to transfer-messenger RNA (tmRNA), required for stable association of tmRNA with ribosomes. tmRNA and SmpB together mimic tRNA shape, replacing the anticodon stem-loop with SmpB. tmRNA is encoded by the ssrA gene; the 2 termini fold to resemble tRNA(Ala) and it encodes a 'tag peptide', a short internal open reading frame. During trans-translation Ala-aminoacylated tmRNA acts like a tRNA, entering the A-site of stalled ribosomes, displacing the stalled mRNA. The ribosome then switches to translate the ORF on the tmRNA; the nascent peptide is terminated with the 'tag peptide' encoded by the tmRNA and targeted for degradation. The ribosome is freed to recommence translation, which seems to be the essential function of trans-translation. In Salinispora tropica (strain ATCC BAA-916 / DSM 44818 / JCM 13857 / NBRC 105044 / CNB-440), this protein is SsrA-binding protein.